We begin with the raw amino-acid sequence, 414 residues long: Methanesulfonate monooxygenase hydroxylase subunit alpha (414 aa).

Positions 44–163 constitute a Rieske domain; it reads WVPFRHESEL…CEVKFGGFVW (120 aa). Positions 86, 88, 115, and 118 each coordinate [2Fe-2S] cluster. Fe cation is bound at residue His225.

The protein belongs to the bacterial ring-hydroxylating dioxygenase alpha subunit family. In terms of assembly, the MSA monooxygenase system consists of 4 proteins: the 2 subunits of the hydroxylase component (MsmA and MsmB), a ferredoxin (MsmC) and a ferredoxin reductase (MsmD). The hydroxylase component consists of a 3 alpha (MsmA) and 3 beta (MsmB) subunits. [2Fe-2S] cluster is required as a cofactor. It depends on Fe cation as a cofactor.

It localises to the cytoplasm. It catalyses the reaction methanesulfonate + NADH + O2 = sulfite + formaldehyde + NAD(+) + H2O. MSAMO is inhibited by metal chelators (such as bathophenanthroline, bathocuprione, neocuprione, alpha-alpha-dipyridil and sodium EDTA) and by sodium azide, sodium arsenate and potassium cyanide. Methanesulfonate monooxygenase (MSAMO) mediates the primary degradation of methanesulfonic acid (MSA) to produce formaldehyd and inorganic sulfite by initial hydroxylation of the carbon atom prior to spontaneous cleavage of the unstable hydroxymethanesulfonic acid. MSAMO has a restricted substrate range that includes only the short-chain aliphatic sulfonates (methane- to butanesulfonate) and excludes all larger molecules, such as arylsulfonates and aromatic sulfonates. All MSAMO components are required for enzyme activity. The polypeptide is Methanesulfonate monooxygenase hydroxylase subunit alpha (Methylosulfonomonas methylovora).